The sequence spans 275 residues: Dermonecrotic toxin LhSicTox-alphaIV2 (275 aa).

The active site involves His-5. Mg(2+) contacts are provided by Glu-25 and Asp-27. Catalysis depends on His-41, which acts as the Nucleophile. Intrachain disulfides connect Cys-45–Cys-51 and Cys-47–Cys-192. Position 85 (Asp-85) interacts with Mg(2+).

This sequence belongs to the arthropod phospholipase D family. Class II subfamily. The cofactor is Mg(2+). In terms of tissue distribution, expressed by the venom gland.

The protein resides in the secreted. The catalysed reaction is an N-(acyl)-sphingosylphosphocholine = an N-(acyl)-sphingosyl-1,3-cyclic phosphate + choline. The enzyme catalyses an N-(acyl)-sphingosylphosphoethanolamine = an N-(acyl)-sphingosyl-1,3-cyclic phosphate + ethanolamine. It carries out the reaction a 1-acyl-sn-glycero-3-phosphocholine = a 1-acyl-sn-glycero-2,3-cyclic phosphate + choline. It catalyses the reaction a 1-acyl-sn-glycero-3-phosphoethanolamine = a 1-acyl-sn-glycero-2,3-cyclic phosphate + ethanolamine. In terms of biological role, dermonecrotic toxins cleave the phosphodiester linkage between the phosphate and headgroup of certain phospholipids (sphingolipid and lysolipid substrates), forming an alcohol (often choline) and a cyclic phosphate. This toxin acts on sphingomyelin (SM). It may also act on ceramide phosphoethanolamine (CPE), lysophosphatidylcholine (LPC) and lysophosphatidylethanolamine (LPE), but not on lysophosphatidylserine (LPS), and lysophosphatidylglycerol (LPG). It acts by transphosphatidylation, releasing exclusively cyclic phosphate products as second products. Induces dermonecrosis, hemolysis, increased vascular permeability, edema, inflammatory response, and platelet aggregation. The chain is Dermonecrotic toxin LhSicTox-alphaIV2 from Loxosceles hirsuta (Recluse spider).